Reading from the N-terminus, the 190-residue chain is Heme-binding protein 1 (190 aa).

The protein belongs to the HEBP family. Monomer. Ubiquitously expressed. Extremely abundant in liver.

It localises to the cytoplasm. Its function is as follows. May bind free porphyrinogens that may be present in the cell and thus facilitate removal of these potentially toxic compound. Binds with a high affinity to one molecule of heme or porphyrins. It binds metalloporphyrins, free porphyrins and N-methylprotoporphyrin with similar affinities. This chain is Heme-binding protein 1 (Hebp1), found in Mus musculus (Mouse).